The sequence spans 306 residues: MADKIAVLLGGTSAERDVSLNSGAAVLAGLREGGINAHPVDPQEVDVAQLKAMGFQKVFIALHGRGGEDGTLQGMLELLGLPYTGSGVMASALSMDKLRSKLLWQGAGLPVAPWVALTRAEFEKGLSEEQKARISALGLPLIVKPSREGSSVGMTKVVEENALQGALSLAFQHDDEILIEKWLCGPEFTVAIVGEEILPSIRIQPAGTFYDYEAKYLSDETQYFCPAGLDASQEAALQSLVLQAWKALGCTGWGRIDVMLDSDGQFYLLEANTSPGMTSHSLVPMAARQAGMSFSQLVVRILELAD.

One can recognise an ATP-grasp domain in the interval 101 to 303; that stretch reads KLLWQGAGLP…FSQLVVRILE (203 aa). Position 134–189 (134–189) interacts with ATP; it reads ISALGLPLIVKPSREGSSVGMTKVVEENALQGALSLAFQHDDEILIEKWLCGPEFT. Positions 257, 270, and 272 each coordinate Mg(2+).

The protein belongs to the D-alanine--D-alanine ligase family. Monomer. It depends on Mg(2+) as a cofactor. The cofactor is Mn(2+).

It is found in the cytoplasm. It catalyses the reaction 2 D-alanine + ATP = D-alanyl-D-alanine + ADP + phosphate + H(+). It participates in cell wall biogenesis; peptidoglycan biosynthesis. In terms of biological role, cell wall formation. The sequence is that of D-alanine--D-alanine ligase B (ddlB) from Salmonella typhimurium (strain LT2 / SGSC1412 / ATCC 700720).